A 336-amino-acid polypeptide reads, in one-letter code: Ketol-acid reductoisomerase (NADP(+)) (336 aa).

Residues 2-181 (AKVYYEKDVM…GATRAGVLET (180 aa)) enclose the KARI N-terminal Rossmann domain. NADP(+) contacts are provided by residues 25 to 28 (YGSQ), arginine 48, serine 52, and 82 to 85 (DELQ). The active site involves histidine 107. Position 133 (glycine 133) interacts with NADP(+). The 146-residue stretch at 182–327 (TFKEETETDL…RQLREMMPFV (146 aa)) folds into the KARI C-terminal knotted domain. Mg(2+) is bound by residues aspartate 190, glutamate 194, glutamate 226, and glutamate 230. Serine 251 is a binding site for substrate.

The protein belongs to the ketol-acid reductoisomerase family. It depends on Mg(2+) as a cofactor.

The catalysed reaction is (2R)-2,3-dihydroxy-3-methylbutanoate + NADP(+) = (2S)-2-acetolactate + NADPH + H(+). It catalyses the reaction (2R,3R)-2,3-dihydroxy-3-methylpentanoate + NADP(+) = (S)-2-ethyl-2-hydroxy-3-oxobutanoate + NADPH + H(+). The protein operates within amino-acid biosynthesis; L-isoleucine biosynthesis; L-isoleucine from 2-oxobutanoate: step 2/4. Its pathway is amino-acid biosynthesis; L-valine biosynthesis; L-valine from pyruvate: step 2/4. In terms of biological role, involved in the biosynthesis of branched-chain amino acids (BCAA). Catalyzes an alkyl-migration followed by a ketol-acid reduction of (S)-2-acetolactate (S2AL) to yield (R)-2,3-dihydroxy-isovalerate. In the isomerase reaction, S2AL is rearranged via a Mg-dependent methyl migration to produce 3-hydroxy-3-methyl-2-ketobutyrate (HMKB). In the reductase reaction, this 2-ketoacid undergoes a metal-dependent reduction by NADPH to yield (R)-2,3-dihydroxy-isovalerate. In Bacillus cytotoxicus (strain DSM 22905 / CIP 110041 / 391-98 / NVH 391-98), this protein is Ketol-acid reductoisomerase (NADP(+)).